A 467-amino-acid chain; its full sequence is Trigger factor (467 aa).

Residues 174–261 (SDIAILTFKG…LQDLKTRELP (88 aa)) enclose the PPIase FKBP-type domain. Positions 439–467 (PKKALNEKVKSSKPKNTQKKTDKTKKDSP) are disordered. Over residues 457–467 (KKTDKTKKDSP) the composition is skewed to basic and acidic residues.

This sequence belongs to the FKBP-type PPIase family. Tig subfamily.

It localises to the cytoplasm. It carries out the reaction [protein]-peptidylproline (omega=180) = [protein]-peptidylproline (omega=0). Functionally, involved in protein export. Acts as a chaperone by maintaining the newly synthesized protein in an open conformation. Functions as a peptidyl-prolyl cis-trans isomerase. The protein is Trigger factor of Prochlorococcus marinus (strain SARG / CCMP1375 / SS120).